The primary structure comprises 123 residues: UPF0231 protein plu3616 (123 aa).

The protein belongs to the UPF0231 family.

The chain is UPF0231 protein plu3616 from Photorhabdus laumondii subsp. laumondii (strain DSM 15139 / CIP 105565 / TT01) (Photorhabdus luminescens subsp. laumondii).